The sequence spans 505 residues: 2,3-bisphosphoglycerate-independent phosphoglycerate mutase (505 aa).

Residues Asp12 and Ser62 each contribute to the Mn(2+) site. Ser62 serves as the catalytic Phosphoserine intermediate. Substrate contacts are provided by residues His123, 153-154 (RD), Arg185, Arg191, 257-260 (RPDR), and Lys330. Mn(2+)-binding residues include Asp397, His401, Asp438, His439, and His456.

Belongs to the BPG-independent phosphoglycerate mutase family. Monomer. Requires Mn(2+) as cofactor.

It catalyses the reaction (2R)-2-phosphoglycerate = (2R)-3-phosphoglycerate. The protein operates within carbohydrate degradation; glycolysis; pyruvate from D-glyceraldehyde 3-phosphate: step 3/5. Functionally, catalyzes the interconversion of 2-phosphoglycerate and 3-phosphoglycerate. This chain is 2,3-bisphosphoglycerate-independent phosphoglycerate mutase, found in Staphylococcus haemolyticus (strain JCSC1435).